The primary structure comprises 224 residues: MKIYGVYMDRPLSAGEEDRMMAAVSAEKREKCRRFYHKEDAHRTLIGDMLIRTAAAKAYGLDPAGISFGVQEYGKPYIPALPDMHFNISHSGRWIVCAVDSKPIGIDIEKMKPGTIDIAKRFFSPTEYSDLQAKHPDQQTDYFYHLWSMKESFIKQAGKGLSLPLDSFSVRLKDDGHVSIELPDGHEPCFIRTYDADEEYKLAVCAAHPDFCDGIEMKTYEELL.

Mg(2+) is bound by residues D107, E109, and E151. Residues 158-189 form a peptidyl carrier protein binding region; sequence GKGLSLPLDSFSVRLKDDGHVSIELPDGHEPC.

This sequence belongs to the P-Pant transferase superfamily. Gsp/Sfp/HetI/AcpT family. Mg(2+) serves as cofactor.

It catalyses the reaction apo-[peptidyl-carrier protein] + CoA = holo-[peptidyl-carrier protein] + adenosine 3',5'-bisphosphate + H(+). May activate the peptidyl carrier protein (PCP) domains of surfactin synthetase SRF1/2/3 and iturin A synthetase, by transferring the 4'-phosphopantetheinyl moiety of coenzyme A (CoA) to a serine residue. Required for the coproduction of the lipopeptide antibiotics, iturin A and surfactin. In Bacillus subtilis, this protein is 4'-phosphopantetheinyl transferase (lpa-14).